A 30-amino-acid polypeptide reads, in one-letter code: Putative alpha-amylase inhibitor (30 aa).

The protein belongs to the leguminous lectin family.

Lectin and alpha-amylase inhibitor. Acts as a defensive protein against insects. This is Putative alpha-amylase inhibitor from Phaseolus vulgaris (Kidney bean).